A 537-amino-acid polypeptide reads, in one-letter code: Tegument protein BRRF2 (537 aa).

Disordered stretches follow at residues 321 to 366 (RPRF…AVPP), 378 to 398 (AKQNRGGMGSLHLAKPEETSP), 414 to 466 (SKQH…DEEF), and 486 to 537 (GLRV…LSVV). The span at 334 to 347 (EPQQTCSQLTSRGN) shows a compositional bias: polar residues. The span at 423-441 (SSQAAPSFSSVAPVASLSG) shows a compositional bias: low complexity. Acidic residues predominate over residues 492–517 (DEDEDGSEDGEFSDLDLSDSDHEGDE).

The protein belongs to the lymphocryptovirus BRRF2 family.

It is found in the virion tegument. This is Tegument protein BRRF2 from Homo sapiens (Human).